A 414-amino-acid polypeptide reads, in one-letter code: 3-isopropylmalate dehydratase large subunit (414 aa).

[4Fe-4S] cluster is bound by residues C295, C353, and C356.

Belongs to the aconitase/IPM isomerase family. LeuC type 2 subfamily. As to quaternary structure, heterodimer of LeuC and LeuD. It depends on [4Fe-4S] cluster as a cofactor.

It carries out the reaction (2R,3S)-3-isopropylmalate = (2S)-2-isopropylmalate. It participates in amino-acid biosynthesis; L-leucine biosynthesis; L-leucine from 3-methyl-2-oxobutanoate: step 2/4. Catalyzes the isomerization between 2-isopropylmalate and 3-isopropylmalate, via the formation of 2-isopropylmaleate. The polypeptide is 3-isopropylmalate dehydratase large subunit (Pyrobaculum islandicum (strain DSM 4184 / JCM 9189 / GEO3)).